Consider the following 145-residue polypeptide: Transcription antitermination protein NusB (145 aa).

It belongs to the NusB family.

In terms of biological role, involved in transcription antitermination. Required for transcription of ribosomal RNA (rRNA) genes. Binds specifically to the boxA antiterminator sequence of the ribosomal RNA (rrn) operons. The chain is Transcription antitermination protein NusB from Burkholderia cenocepacia (strain HI2424).